A 222-amino-acid polypeptide reads, in one-letter code: Kinetochore protein Spc25 (222 aa).

The stretch at 51 to 86 forms a coiled coil; it reads RHQRKVGKLQKVLMERREELDKRVSFIEELDRELEA.

This sequence belongs to the SPC25 family. As to quaternary structure, component of the Ndc80 complex, which is composed of Ndc80, Nuf2 and Spc25.

Its subcellular location is the nucleus. The protein resides in the chromosome. The protein localises to the centromere. It is found in the kinetochore. Functionally, acts as a component of the essential kinetochore-associated Ndc80 complex, which is required for chromosome segregation and spindle checkpoint activity during meiosis and mitosis. Required for kinetochore integrity and the organization of stable microtubule binding sites in the outer plate of the kinetochore. Participates in SAC signaling that responds specifically to disruptions in spindle microtubule dynamics. The NDC80 complex synergistically enhances the affinity of the SKA1 complex for microtubules and may allow the NDC80 complex to track depolymerizing microtubules. This chain is Kinetochore protein Spc25, found in Drosophila melanogaster (Fruit fly).